A 360-amino-acid chain; its full sequence is GTPase Obg (360 aa).

Residues M1–I156 enclose the Obg domain. The 204-residue stretch at A157 to Q360 folds into the OBG-type G domain. Residues G163–S170, F188–V192, D210–G213, N279–D282, and S341–V343 each bind GTP. 2 residues coordinate Mg(2+): S170 and T190.

Belongs to the TRAFAC class OBG-HflX-like GTPase superfamily. OBG GTPase family. Monomer. It depends on Mg(2+) as a cofactor.

The protein resides in the cytoplasm. Functionally, an essential GTPase which binds GTP, GDP and possibly (p)ppGpp with moderate affinity, with high nucleotide exchange rates and a fairly low GTP hydrolysis rate. Plays a role in control of the cell cycle, stress response, ribosome biogenesis and in those bacteria that undergo differentiation, in morphogenesis control. This Helicobacter pylori (strain J99 / ATCC 700824) (Campylobacter pylori J99) protein is GTPase Obg.